Here is a 432-residue protein sequence, read N- to C-terminus: Anaerobic glycerol-3-phosphate dehydrogenase subunit B (432 aa).

This sequence belongs to the anaerobic G-3-P dehydrogenase subunit B family. In terms of assembly, composed of a catalytic GlpA/B dimer and of membrane bound GlpC. Requires FMN as cofactor.

The catalysed reaction is a quinone + sn-glycerol 3-phosphate = dihydroxyacetone phosphate + a quinol. It participates in polyol metabolism; glycerol degradation via glycerol kinase pathway; glycerone phosphate from sn-glycerol 3-phosphate (anaerobic route): step 1/1. Its function is as follows. Conversion of glycerol 3-phosphate to dihydroxyacetone. Uses fumarate or nitrate as electron acceptor. The sequence is that of Anaerobic glycerol-3-phosphate dehydrogenase subunit B from Histophilus somni (strain 129Pt) (Haemophilus somnus).